The primary structure comprises 832 residues: Sodium/hydrogen exchanger 3 (832 aa).

The first 29 residues, 1 to 29, serve as a signal peptide directing secretion; the sequence is MGRNRSGCVARCVSLTALVLLLCCPVVRS. The Extracellular portion of the chain corresponds to 30 to 66; it reads SEAETDPDSHTEHGDSHGGSREGNDTGFQIVTFRWEH. Residues 31-51 are disordered; the sequence is EAETDPDSHTEHGDSHGGSRE. Residues 36 to 51 are compositionally biased toward basic and acidic residues; sequence PDSHTEHGDSHGGSRE. A helical transmembrane segment spans residues 67-89; that stretch reads VQTPYVIALWILVASLGKIVFHL. Over 90–97 the chain is Cytoplasmic; sequence SEKVTSVV. A helical membrane pass occupies residues 98–117; it reads PESALLIVLGLILGGIVWAA. Over 118 to 126 the chain is Extracellular; the sequence is DHSASFTLT. A helical transmembrane segment spans residues 127 to 144; the sequence is PTVFFFYLLPPIVLDAGY. At 145–147 the chain is on the cytoplasmic side; sequence FMP. A helical transmembrane segment spans residues 148–183; it reads NRHFFGNLGTILTYAVIGTVWNAATTGLSLYGVFLL. The a 1,2-diacyl-sn-glycero-3-phospho-(1D-myo-inositol) site is built by glycine 153, glycine 156, and threonine 157. Over 184–196 the chain is Extracellular; that stretch reads GLMGDLKAGLLEF. A helical membrane pass occupies residues 197–218; sequence LLFGSLIAAVDPVAVLAVFEEV. At 219 to 220 the chain is on the cytoplasmic side; it reads HV. The helical transmembrane segment at 221–252 threads the bilayer; that stretch reads NEVLFIIVFGESLLNDAVTVVLYNVFNSFVEV. Over 253-259 the chain is Extracellular; that stretch reads GAGNVQG. The chain crosses the membrane as a helical span at residues 260 to 294; that stretch reads LDYFKGIVSFFVVSLGGTAVGIIFAFILSLVTRFT. The Cytoplasmic segment spans residues 295 to 296; that stretch reads KH. A helical transmembrane segment spans residues 297–319; it reads VRVIEPGFVFVISYLSYLTADML. The Extracellular segment spans residues 320 to 321; the sequence is SL. The chain crosses the membrane as a helical span at residues 322–338; it reads SAILAITFCGICCQKYV. Over 339–345 the chain is Cytoplasmic; the sequence is KANLCEQ. A helical transmembrane segment spans residues 346-374; sequence SITTVRYAMKMLASGAETIIFMFLGISAV. The Extracellular portion of the chain corresponds to 375–382; sequence NPTIWTWN. A helical transmembrane segment spans residues 383–404; the sequence is TAFILLTLVFISVYRVIGVVIQ. The Cytoplasmic segment spans residues 405–417; that stretch reads TWILNHYRVVQLE. The chain crosses the membrane as a helical span at residues 418 to 441; it reads IIDQVVMSYGGLRGAVAFALVVLL. Over 442–448 the chain is Extracellular; sequence DSNYVGE. The helical transmembrane segment at 449 to 482 threads the bilayer; sequence RRLFVSTTIIVVYFTVIFQGLTIKPLVKWLKVKR. The Cytoplasmic portion of the chain corresponds to 483-832; sequence SQHKEPLLNE…PLSFLPESSM (350 aa). A 1,2-diacyl-sn-glycero-3-phospho-(1D-myo-inositol) is bound by residues glutamine 512, isoleucine 513, and histidine 515. The tract at residues 740–760 is disordered; the sequence is TPASNDADETGTGIDNPSFSN.

The protein belongs to the monovalent cation:proton antiporter 1 (CPA1) transporter (TC 2.A.36) family. In terms of assembly, homodimer. As to expression, detected in early distal renal tubules in the kidney bundle zone, in proximal and late distal tubules in the kidney sinus zone, in absorptive epithelial cells of the intestine and in rectal epithelium (at protein level). Isoform 1 is expressed strongly in the gills, at intermediate levels in the kidney, spleen, rectum, spiral intestine and skin, and weakly in the brain, blood and rectal gland. Isoform 2 is expressed strongly in the kidney, rectum and spiral intestine, and weakly in muscles and the rectal gland.

The protein localises to the apical cell membrane. It localises to the cell membrane. The protein resides in the recycling endosome membrane. Its subcellular location is the early endosome membrane. It catalyses the reaction Na(+)(in) + H(+)(out) = Na(+)(out) + H(+)(in). With respect to regulation, seems to switch between active and inactive modes in response to various stimuli. Activated directly or indirectly by membrane phosphatidylinositol (PIs). Regulated by a variety of auxiliary proteins, which facilitate the maturation, cell surface expression and function of the transporter. Inhibited specifically by the drug tenapanor. In terms of biological role, plasma membrane Na(+)/H(+) antiporter. Exchanges intracellular H(+) ions for extracellular Na(+) in 1:1 stoichiometry, playing a key role in salt and fluid absorption and pH homeostasis. Major apical Na(+)/H(+) exchanger in kidney and intestine playing an important role in renal and intestine Na(+) absorption and blood pressure regulation. The chain is Sodium/hydrogen exchanger 3 from Triakis scyllium (Banded houndshark).